A 466-amino-acid chain; its full sequence is 23S rRNA (uracil(1939)-C(5))-methyltransferase RlmD (466 aa).

Positions 1–54 (MVDVLNIESLDLEARGIAHRDGKVLFVEGALPGERVTVQTVRRKPSYEIAKVEE) constitute a TRAM domain. Cysteine 67, cysteine 73, cysteine 76, and cysteine 155 together coordinate [4Fe-4S] cluster. The S-adenosyl-L-methionine site is built by glutamine 264, phenylalanine 293, asparagine 298, glutamate 314, asparagine 342, and aspartate 363. The active-site Nucleophile is the cysteine 393.

It belongs to the class I-like SAM-binding methyltransferase superfamily. RNA M5U methyltransferase family. RlmD subfamily.

The catalysed reaction is uridine(1939) in 23S rRNA + S-adenosyl-L-methionine = 5-methyluridine(1939) in 23S rRNA + S-adenosyl-L-homocysteine + H(+). Functionally, catalyzes the formation of 5-methyl-uridine at position 1939 (m5U1939) in 23S rRNA. The chain is 23S rRNA (uracil(1939)-C(5))-methyltransferase RlmD from Bordetella bronchiseptica (strain ATCC BAA-588 / NCTC 13252 / RB50) (Alcaligenes bronchisepticus).